The following is a 225-amino-acid chain: Flagellar transcriptional regulator FlhC (225 aa).

Residues Cys-149, Cys-152, Cys-169, and Cys-172 each coordinate Zn(2+).

Belongs to the FlhC family. In terms of assembly, heterohexamer composed of two FlhC and four FlhD subunits. Each FlhC binds a FlhD dimer, forming a heterotrimer, and a hexamer assembles by dimerization of two heterotrimers. Zn(2+) serves as cofactor.

Its subcellular location is the cytoplasm. Its function is as follows. Functions in complex with FlhD as a master transcriptional regulator that regulates transcription of several flagellar and non-flagellar operons by binding to their promoter region. Activates expression of class 2 flagellar genes, including fliA, which is a flagellum-specific sigma factor that turns on the class 3 genes. Also regulates genes whose products function in a variety of physiological pathways. The chain is Flagellar transcriptional regulator FlhC from Burkholderia lata (strain ATCC 17760 / DSM 23089 / LMG 22485 / NCIMB 9086 / R18194 / 383).